A 331-amino-acid polypeptide reads, in one-letter code: Glutamyl-tRNA reductase (331 aa).

Substrate-binding positions include 49–52 (TCNR), Ser-107, 112–114 (EDQ), and Gln-118. Cys-50 functions as the Nucleophile in the catalytic mechanism. 184–189 (GNGEIG) serves as a coordination point for NADP(+).

It belongs to the glutamyl-tRNA reductase family. In terms of assembly, homodimer.

The catalysed reaction is (S)-4-amino-5-oxopentanoate + tRNA(Glu) + NADP(+) = L-glutamyl-tRNA(Glu) + NADPH + H(+). The protein operates within porphyrin-containing compound metabolism; protoporphyrin-IX biosynthesis; 5-aminolevulinate from L-glutamyl-tRNA(Glu): step 1/2. Catalyzes the NADPH-dependent reduction of glutamyl-tRNA(Glu) to glutamate 1-semialdehyde (GSA). This chain is Glutamyl-tRNA reductase, found in Acetivibrio thermocellus (strain ATCC 27405 / DSM 1237 / JCM 9322 / NBRC 103400 / NCIMB 10682 / NRRL B-4536 / VPI 7372) (Clostridium thermocellum).